We begin with the raw amino-acid sequence, 608 residues long: UvrABC system protein C (608 aa).

The 79-residue stretch at asparagine 16–isoleucine 94 folds into the GIY-YIG domain. The UVR domain occupies asparagine 204–valine 239.

The protein belongs to the UvrC family. In terms of assembly, interacts with UvrB in an incision complex.

It localises to the cytoplasm. Its function is as follows. The UvrABC repair system catalyzes the recognition and processing of DNA lesions. UvrC both incises the 5' and 3' sides of the lesion. The N-terminal half is responsible for the 3' incision and the C-terminal half is responsible for the 5' incision. The sequence is that of UvrABC system protein C from Pseudomonas paraeruginosa (strain DSM 24068 / PA7) (Pseudomonas aeruginosa (strain PA7)).